A 375-amino-acid chain; its full sequence is L-asparaginase 2 (375 aa).

Residues 1-19 (MKKQRMLVLFTALLFVFTG) form the signal peptide. The segment at 22 to 46 (HSPETKESPKEKAQTQKVSSASASE) is disordered. A compositionally biased stretch (basic and acidic residues) spans 24 to 35 (PETKESPKEKAQ). Residues 51–375 (PNIRILATGG…QKIQAYFNEY (325 aa)) form the Asparaginase/glutaminase domain. T61 acts as the O-isoaspartyl threonine intermediate in catalysis. Substrate-binding positions include S108 and 141 to 142 (TD).

It belongs to the asparaginase 1 family. As to quaternary structure, homotetramer.

It catalyses the reaction L-asparagine + H2O = L-aspartate + NH4(+). Catalyzes the conversion of L-asparagine to L-aspartate and ammonium. The chain is L-asparaginase 2 (ansZ) from Bacillus subtilis (strain 168).